Reading from the N-terminus, the 301-residue chain is tRNA uridine(34) hydroxylase (301 aa).

In terms of domain architecture, Rhodanese spans S120 to S214. C174 serves as the catalytic Cysteine persulfide intermediate.

This sequence belongs to the TrhO family.

It carries out the reaction uridine(34) in tRNA + AH2 + O2 = 5-hydroxyuridine(34) in tRNA + A + H2O. Its function is as follows. Catalyzes oxygen-dependent 5-hydroxyuridine (ho5U) modification at position 34 in tRNAs. This chain is tRNA uridine(34) hydroxylase, found in Jannaschia sp. (strain CCS1).